The sequence spans 420 residues: Glucose-1-phosphate adenylyltransferase (420 aa).

Alpha-D-glucose 1-phosphate is bound by residues Y97, G162, 177–178 (EK), and S188.

It belongs to the bacterial/plant glucose-1-phosphate adenylyltransferase family. As to quaternary structure, homotetramer.

The catalysed reaction is alpha-D-glucose 1-phosphate + ATP + H(+) = ADP-alpha-D-glucose + diphosphate. The protein operates within glycan biosynthesis; glycogen biosynthesis. Functionally, involved in the biosynthesis of ADP-glucose, a building block required for the elongation reactions to produce glycogen. Catalyzes the reaction between ATP and alpha-D-glucose 1-phosphate (G1P) to produce pyrophosphate and ADP-Glc. The chain is Glucose-1-phosphate adenylyltransferase from Pseudothermotoga lettingae (strain ATCC BAA-301 / DSM 14385 / NBRC 107922 / TMO) (Thermotoga lettingae).